A 312-amino-acid polypeptide reads, in one-letter code: DNA-directed RNA polymerase subunit alpha (312 aa).

Positions 1–229 are alpha N-terminal domain (alpha-NTD); it reads MLQYQIDRVD…ALFQPLATVT (229 aa). Positions 241–312 are alpha C-terminal domain (alpha-CTD); it reads SAESQIPLEE…ISLPQSRTTA (72 aa).

This sequence belongs to the RNA polymerase alpha chain family. As to quaternary structure, in cyanobacteria the RNAP catalytic core is composed of 2 alpha, 1 beta, 1 beta', 1 gamma and 1 omega subunit. When a sigma factor is associated with the core the holoenzyme is formed, which can initiate transcription.

The catalysed reaction is RNA(n) + a ribonucleoside 5'-triphosphate = RNA(n+1) + diphosphate. In terms of biological role, DNA-dependent RNA polymerase catalyzes the transcription of DNA into RNA using the four ribonucleoside triphosphates as substrates. The chain is DNA-directed RNA polymerase subunit alpha from Synechococcus sp. (strain RCC307).